We begin with the raw amino-acid sequence, 450 residues long: tRNA-2-methylthio-N(6)-dimethylallyladenosine synthase (450 aa).

An MTTase N-terminal domain is found at 7-127 (KRLYIKTYGC…LPELIARAHR (121 aa)). Residues Cys16, Cys52, Cys90, Cys165, Cys169, and Cys172 each contribute to the [4Fe-4S] cluster site. The 228-residue stretch at 151-378 (QVSGVSAFLT…NQLLDEQQKA (228 aa)) folds into the Radical SAM core domain. The 63-residue stretch at 381-443 (ILQVGKTMPV…KMSLGGVLET (63 aa)) folds into the TRAM domain.

The protein belongs to the methylthiotransferase family. MiaB subfamily. As to quaternary structure, monomer. [4Fe-4S] cluster is required as a cofactor.

It is found in the cytoplasm. The catalysed reaction is N(6)-dimethylallyladenosine(37) in tRNA + (sulfur carrier)-SH + AH2 + 2 S-adenosyl-L-methionine = 2-methylsulfanyl-N(6)-dimethylallyladenosine(37) in tRNA + (sulfur carrier)-H + 5'-deoxyadenosine + L-methionine + A + S-adenosyl-L-homocysteine + 2 H(+). Its function is as follows. Catalyzes the methylthiolation of N6-(dimethylallyl)adenosine (i(6)A), leading to the formation of 2-methylthio-N6-(dimethylallyl)adenosine (ms(2)i(6)A) at position 37 in tRNAs that read codons beginning with uridine. This is tRNA-2-methylthio-N(6)-dimethylallyladenosine synthase from Caulobacter sp. (strain K31).